The primary structure comprises 152 residues: Protein Smg homolog (152 aa).

Belongs to the Smg family.

In Bordetella avium (strain 197N), this protein is Protein Smg homolog.